A 704-amino-acid polypeptide reads, in one-letter code: Meprin A subunit beta (704 aa).

Residues 1–20 (MDARHWPWFLVFATFLLVSG) form the signal peptide. The propeptide occupies 21–64 (LPAPEKFVKDIDGGIDQDIFDINEDLGLDLFEGDIKLEASGRNS). Over 21–654 (LPAPEKFVKD…RCEKRGSTKD (634 aa)) the chain is Extracellular. The region spanning 63–257 (NSIIGDNYRW…LKLNQLYSCT (195 aa)) is the Peptidase M12A domain. Intrachain disulfides connect C104-C256, C125-C145, and C266-C428. H153 is a Zn(2+) binding site. E154 is an active-site residue. The Zn(2+) site is built by H157 and H163. 8 N-linked (GlcNAc...) asparagine glycosylation sites follow: N193, N219, N316, N422, N437, N528, N547, and N592. An MAM domain is found at 261–430 (SFMDSCDFEL…INLSETRCPH (170 aa)). The MATH domain maps to 431–585 (HIWHIQNFTQ…GDDVYILLTV (155 aa)). Residues 607 to 647 (VHNACSEVECQNGGICTLQEGRAECKCPAGEDWWYMGKRCE) enclose the EGF-like domain. 3 disulfides stabilise this stretch: C611–C622, C616–C631, and C633–C646. Residues 655 to 678 (TIVIAVSSTVTVFAVMLIITLISV) traverse the membrane as a helical segment. The Cytoplasmic segment spans residues 679 to 704 (YCTRRKYRKKASAKTAAMNLENQHAF). Residue T693 is modified to Phosphothreonine.

In terms of assembly, homotetramer consisting of disulfide-linked beta subunits, or heterotetramer of two alpha and two beta subunits formed by non-covalent association of two disulfide-linked heterodimers. Interacts with MBL2 through its carbohydrate moiety. This interaction may inhibit its catalytic activity. Interacts with TSPAN8. Zn(2+) is required as a cofactor. Post-translationally, N-glycosylated; contains high mannose and/or complex biantennary structures. In terms of processing, proteolytically activated by trypsin in the intestinal lumen and kallikrein-related peptidases in other tissues. Phosphorylated by PKC at multiple sites of its cytoplasmic part. Phosphorylation dcreases activity at the cell surface, leading to diminished substrate cleavage. Kidney, intestinal brush borders and salivary ducts.

The protein localises to the cell membrane. It is found in the secreted. The catalysed reaction is Hydrolysis of proteins, including azocasein, and peptides. Hydrolysis of 5-His-|-Leu-6, 6-Leu-|-Cys-7, 14-Ala-|-Leu-15 and 19-Cys-|-Gly-20 bonds in insulin B chain.. Its activity is regulated as follows. Strongly inhibited by fetuin-A/AHSG. Its function is as follows. Membrane metallopeptidase that sheds many membrane-bound proteins. Exhibits a strong preference for acidic amino acids at the P1' position. Known substrates include: FGF19, VGFA, IL1B, IL18, procollagen I and III, E-cadherin, KLK7, gastrin, ADAM10, tenascin-C. The presence of several pro-inflammatory cytokine among substrates implicate MEP1B in inflammation. It is also involved in tissue remodeling due to its capability to degrade extracellular matrix components. The polypeptide is Meprin A subunit beta (Mep1b) (Rattus norvegicus (Rat)).